The chain runs to 668 residues: UvrABC system protein B (668 aa).

A Helicase ATP-binding domain is found at 31-188 (HGIEAGEKAQ…RKLVNIQFER (158 aa)). 44-51 (GATGTGKT) lines the ATP pocket. Residues 97–120 (YYDYYQPEAYVPSSDTYIEKDSSI) carry the Beta-hairpin motif. The region spanning 435–601 (QMDDLVGEIN…TIIKPIRDLI (167 aa)) is the Helicase C-terminal domain. One can recognise a UVR domain in the interval 630-665 (EKLIARLEDEMRAAAKKLDFEQAASLRDTIMDMKTE).

It belongs to the UvrB family. Forms a heterotetramer with UvrA during the search for lesions. Interacts with UvrC in an incision complex.

The protein localises to the cytoplasm. Its function is as follows. The UvrABC repair system catalyzes the recognition and processing of DNA lesions. A damage recognition complex composed of 2 UvrA and 2 UvrB subunits scans DNA for abnormalities. Upon binding of the UvrA(2)B(2) complex to a putative damaged site, the DNA wraps around one UvrB monomer. DNA wrap is dependent on ATP binding by UvrB and probably causes local melting of the DNA helix, facilitating insertion of UvrB beta-hairpin between the DNA strands. Then UvrB probes one DNA strand for the presence of a lesion. If a lesion is found the UvrA subunits dissociate and the UvrB-DNA preincision complex is formed. This complex is subsequently bound by UvrC and the second UvrB is released. If no lesion is found, the DNA wraps around the other UvrB subunit that will check the other stand for damage. This is UvrABC system protein B from Levilactobacillus brevis (strain ATCC 367 / BCRC 12310 / CIP 105137 / JCM 1170 / LMG 11437 / NCIMB 947 / NCTC 947) (Lactobacillus brevis).